We begin with the raw amino-acid sequence, 99 residues long: (4S)-4-hydroxy-5-phosphonooxypentane-2,3-dione isomerase (99 aa).

The 90-residue stretch at His-2–Phe-91 folds into the ABM domain.

It belongs to the LsrG family. Homodimer.

The protein localises to the cytoplasm. The catalysed reaction is (2S)-2-hydroxy-3,4-dioxopentyl phosphate = 3-hydroxy-2,4-dioxopentyl phosphate. In terms of biological role, involved in the degradation of phospho-AI-2, thereby terminating induction of the lsr operon and closing the AI-2 signaling cycle. Catalyzes the conversion of (4S)-4-hydroxy-5-phosphonooxypentane-2,3-dione (P-DPD) to 3-hydroxy-5-phosphonooxypentane-2,4-dione (P-HPD). The polypeptide is (4S)-4-hydroxy-5-phosphonooxypentane-2,3-dione isomerase (Photorhabdus laumondii subsp. laumondii (strain DSM 15139 / CIP 105565 / TT01) (Photorhabdus luminescens subsp. laumondii)).